The chain runs to 96 residues: Large ribosomal subunit protein bL21 (96 aa).

This sequence belongs to the bacterial ribosomal protein bL21 family. Part of the 50S ribosomal subunit. Contacts protein L20.

Its function is as follows. This protein binds to 23S rRNA in the presence of protein L20. In Prosthecochloris aestuarii (strain DSM 271 / SK 413), this protein is Large ribosomal subunit protein bL21.